Here is a 50-residue protein sequence, read N- to C-terminus: Phospholipase A2 trimorphin (50 aa).

Positions 28, 30, and 32 each coordinate Ca(2+). Residues C29 and C45 are joined by a disulfide bond. H48 is an active-site residue. D49 contacts Ca(2+).

Ca(2+) is required as a cofactor. Expressed by the venom gland.

The protein localises to the secreted. It carries out the reaction a 1,2-diacyl-sn-glycero-3-phosphocholine + H2O = a 1-acyl-sn-glycero-3-phosphocholine + a fatty acid + H(+). With respect to regulation, inhibited by EDTA. Its function is as follows. PLA2 catalyzes the calcium-dependent hydrolysis of the 2-acyl groups in 3-sn-phosphoglycerides. This chain is Phospholipase A2 trimorphin, found in Trimorphodon lambda (Sonoran lyre snake).